The chain runs to 269 residues: Replication protein A 32 kDa subunit (269 aa).

Positions 1–22 (MSNRVQGGFDNNSGNNQSAQKQ) are enriched in polar residues. Positions 1 to 25 (MSNRVQGGFDNNSGNNQSAQKQQAE) are disordered. A DNA-binding region (OB) is located at residues 69-149 (ITAKFEFLQS…AQIQLLYFSI (81 aa)).

This sequence belongs to the replication factor A protein 2 family. In terms of assembly, component of the replication protein A complex (RPA), a heterotrimeric complex composed of RPA1, RPA2/TEB2 and RPA3/TEB3. Component of the telomerase holoenzyme complex, composed of the catalytic core (the catalytic subunit TERT, the telomerase RNA template component TER and TAP65/p65), which is associated with two heterotrimeric subcomplexes: (i) the replication protein A (RPA)-related subcomplex, composed of TEB1, RPA2/TEB2 and RPA3/TEB3 and (ii) the CST-like subcomplex, composed of TAP75/p75, TAP45/p45 and TAP19/p19. TEB1 and the CST-like subcomplex are tethered to the catalytic core by TAP50/p50.

It is found in the nucleus. Its subcellular location is the chromosome. The protein localises to the telomere. Its function is as follows. Component of the heterotrimeric replication protein A (RPA) and holoenzyme telomerase ribonucleoprotein complexes. As part of the RPA complex, binds and stabilizes single-stranded DNA (ssDNA) intermediates, that form during DNA replication or upon DNA stress. It prevents their reannealing and in parallel, recruits and activates different proteins and complexes involved in DNA metabolism. Thereby, it plays an essential role both in DNA replication and the cellular response to DNA damage. In the cellular response to DNA damage, the RPA complex controls DNA repair and DNA damage checkpoint activation. Also part of a subcomplex of the holoenzyme telomerase ribonucleoprotein complex: this subcomplex that contains TEB1, RPA2/TEB2, RPA3/TEB3, but not RPA1, mediates the recruitment of telomerase to telomeric DNA via specific interaction between TEB1 and telomeric ssDNA. In the holoenzyme telomerase ribonucleoprotein complex, RPA2/TEB2 and RPA3/TEB3 act as assembly factors for TEB1 incorporation into telomerase holoenzyme. In the holoenzyme telomerase ribonucleoprotein complex, RPA2/TEB2 does not contribute to ssDNA affinity, while it contributes to ssDNA affinity in the RPA complex. The protein is Replication protein A 32 kDa subunit (RPA2) of Tetrahymena thermophila (strain SB210).